A 752-amino-acid chain; its full sequence is Photosystem I P700 chlorophyll a apoprotein A1 (752 aa).

8 consecutive transmembrane segments (helical) span residues 73-96 (IFSA…FHGA), 159-182 (LYVT…FHYH), 198-222 (MNHH…HVSL), 294-312 (RAHH…GHMY), 349-372 (WHAQ…HHMY), 388-414 (LCLF…IFMV), 436-458 (AIIS…LYIH), and 533-551 (FLVH…LILL). [4Fe-4S] cluster contacts are provided by cysteine 575 and cysteine 584. A run of 2 helical transmembrane segments spans residues 591–612 (HVFL…HFSW) and 666–688 (LSAY…MFLF). A chlorophyll a'-binding site is contributed by histidine 677. Residues methionine 685 and tyrosine 693 each contribute to the chlorophyll a site. Tryptophan 694 is a binding site for phylloquinone. Residues 726-746 (AVGVAHYLLGGIATTWSFFHA) form a helical membrane-spanning segment.

This sequence belongs to the PsaA/PsaB family. The PsaA/B heterodimer binds the P700 chlorophyll special pair and subsequent electron acceptors. PSI consists of a core antenna complex that captures photons, and an electron transfer chain that converts photonic excitation into a charge separation. The eukaryotic PSI reaction center is composed of at least 11 subunits. P700 is a chlorophyll a/chlorophyll a' dimer, A0 is one or more chlorophyll a, A1 is one or both phylloquinones and FX is a shared 4Fe-4S iron-sulfur center. is required as a cofactor.

It is found in the plastid. The protein localises to the cyanelle thylakoid membrane. The catalysed reaction is reduced [plastocyanin] + hnu + oxidized [2Fe-2S]-[ferredoxin] = oxidized [plastocyanin] + reduced [2Fe-2S]-[ferredoxin]. In terms of biological role, psaA and PsaB bind P700, the primary electron donor of photosystem I (PSI), as well as the electron acceptors A0, A1 and FX. PSI is a cytochrome c6-ferredoxin oxidoreductase, converting photonic excitation into a charge separation, which transfers an electron from the donor P700 chlorophyll pair to the spectroscopically characterized acceptors A0, A1, FX, FA and FB in turn. Oxidized P700 is reduced on the lumenal side of the thylakoid membrane by cytochrome c6. This Cyanophora paradoxa protein is Photosystem I P700 chlorophyll a apoprotein A1.